Here is a 57-residue protein sequence, read N- to C-terminus: UPF0391 membrane protein Atu4467 (57 aa).

Transmembrane regions (helical) follow at residues 4-24 (WALIFFVISLIAGVFGFTGIS) and 33-53 (ILFFIAVVIFLVFLVLALMAG).

The protein belongs to the UPF0391 family.

The protein localises to the cell membrane. The chain is UPF0391 membrane protein Atu4467 from Agrobacterium fabrum (strain C58 / ATCC 33970) (Agrobacterium tumefaciens (strain C58)).